The primary structure comprises 565 residues: SRSF protein kinase 3 (565 aa).

The disordered stretch occupies residues 1–44 (MSANAGGSGSVDCGGSSSSSQTSCGPESSGSELTPATPAPRLLQ). Positions 10–31 (SVDCGGSSSSSQTSCGPESSGS) are enriched in low complexity. Ser-49 carries the post-translational modification Phosphoserine. A Protein kinase domain is found at 78-563 (YHVVRKLGWG…AADCLQHPWL (486 aa)). ATP-binding positions include 84–92 (LGWGHFSTV) and Lys-107. The active-site Proton acceptor is the Asp-211. The segment covering 236 to 253 (WQQSGAQPPSRSTVSTAP) has biased composition (polar residues). Disordered stretches follow at residues 236–280 (WQQS…KRLL) and 295–350 (AAVQ…QTSG). Residues 262-277 (SKNKRKKMRRKRKQQK) are compositionally biased toward basic residues. Over residues 325 to 350 (AGPSPASSSPVPGGERSLSPSSQTSG) the composition is skewed to low complexity. Ser-328 is subject to Phosphoserine.

Belongs to the protein kinase superfamily. CMGC Ser/Thr protein kinase family. As to expression, exclusively expressed in skeletal and heart muscle.

It localises to the nucleus. Its subcellular location is the cytoplasm. It catalyses the reaction L-seryl-[protein] + ATP = O-phospho-L-seryl-[protein] + ADP + H(+). The enzyme catalyses L-threonyl-[protein] + ATP = O-phospho-L-threonyl-[protein] + ADP + H(+). Functionally, serine/arginine-rich protein-specific kinase which specifically phosphorylates its substrates at serine residues located in regions rich in arginine/serine dipeptides, known as RS domains. Phosphorylates the SR splicing factor SRSF1 and the lamin-B receptor (LBR) in vitro. Required for normal muscle development. This is SRSF protein kinase 3 (Srpk3) from Mus musculus (Mouse).